A 490-amino-acid chain; its full sequence is Solute carrier family 2, facilitated glucose transporter member 1 (490 aa).

Residues 1-10 (MESGSKMTAR) lie on the Cytoplasmic side of the membrane. The helical transmembrane segment at 11–32 (LMLAVGGAVLGSLQFGYNTGVI) threads the bilayer. Residues 33–65 (NRPQKVIEDFYNHTWLYRYEEPISPATLTTLWS) lie on the Extracellular side of the membrane. N44 carries an N-linked (GlcNAc...) asparagine glycan. A helical membrane pass occupies residues 66-86 (LSVAIFSVGGMIGSFSVGLFV). Residues 87–89 (NRF) are Cytoplasmic-facing. A helical transmembrane segment spans residues 90-111 (GRRNSMLMSNILAFLAAVLMGF). The Extracellular portion of the chain corresponds to 112–119 (SKMALSFE). A helical transmembrane segment spans residues 120–143 (MLILGRFIIGLYSGLTTGFVPMYV). The Cytoplasmic portion of the chain corresponds to 144–154 (GEVSPTALRGA). A helical transmembrane segment spans residues 155–175 (LGTFHQLGIVLGILIAQVFGL). Residue Q160 participates in D-glucose binding. Over 176 to 184 (DLIMGNDSL) the chain is Extracellular. Residues 185–205 (WPLLLGFIFVPALLQCIILPF) traverse the membrane as a helical segment. Topologically, residues 206 to 270 (APESPRFLLI…LFRSPMYRQP (65 aa)) are cytoplasmic. Residues 271–292 (ILIAIVLQLSQQLSGINAVFYY) form a helical membrane-spanning segment. Residues 281–282 (QQ) and N287 each bind D-glucose. The Extracellular segment spans residues 293–305 (STSIFEKSGVEQP). A helical membrane pass occupies residues 306 to 327 (VYATIGSGVVNTAFTVVSLFVV). Residue N316 coordinates D-glucose. At 328–333 (ERAGRR) the chain is on the cytoplasmic side. A helical membrane pass occupies residues 334-354 (TLHLIGLAGMAGCAILMTIAL). At 355–364 (TLLDQMPWMS) the chain is on the extracellular side. The helical transmembrane segment at 365-387 (YLSIVAIFGFVAFFEIGPGPIPW) threads the bilayer. 2 residues coordinate D-glucose: E379 and W387. The Cytoplasmic portion of the chain corresponds to 388–400 (FIVAELFSQGPRP). A helical transmembrane segment spans residues 401–421 (AAFAVAGLSNWTSNFIVGMGF). Residues 422–428 (QYIAQLC) are Extracellular-facing. Residues 429 to 449 (GSYVFIIFTVLLVLFFIFTYF) traverse the membrane as a helical segment. Over 450–490 (KVPETKGRTFDEIAYRFRQGGASQSDKTPDEFHSLGADSQV) the chain is Cytoplasmic. The segment at 470 to 490 (GASQSDKTPDEFHSLGADSQV) is disordered.

Belongs to the major facilitator superfamily. Sugar transporter (TC 2.A.1.1) family. Glucose transporter subfamily. In terms of assembly, interacts with isoform 1 of BSG. Retinal cones (at protein level).

The protein localises to the cell membrane. The protein resides in the photoreceptor inner segment. It carries out the reaction D-glucose(out) = D-glucose(in). In terms of biological role, facilitative glucose transporter, which is responsible for constitutive or basal glucose uptake. Has a very broad substrate specificity; can transport a wide range of aldoses including both pentoses and hexoses. Most important energy carrier of the brain: present at the blood-brain barrier and assures the energy-independent, facilitative transport of glucose into the brain. In association with BSG and NXNL1, promotes retinal cone survival by increasing glucose uptake into photoreceptors. Required for mesendoderm differentiation. The polypeptide is Solute carrier family 2, facilitated glucose transporter member 1 (Gallus gallus (Chicken)).